Reading from the N-terminus, the 342-residue chain is Glucokinase (342 aa).

ATP is bound at residue 7–12; it reads GDIGGT.

It belongs to the bacterial glucokinase family.

It is found in the cytoplasm. The catalysed reaction is D-glucose + ATP = D-glucose 6-phosphate + ADP + H(+). This Trichormus variabilis (strain ATCC 29413 / PCC 7937) (Anabaena variabilis) protein is Glucokinase.